The following is a 535-amino-acid chain: Alkaline phosphatase, placental type (535 aa).

Positions methionine 1 to glycine 22 are cleaved as a signal peptide. Mg(2+) is bound at residue aspartate 64. Residues aspartate 64 and serine 114 each coordinate Zn(2+). Serine 114 (phosphoserine intermediate) is an active-site residue. A disulfide bridge links cysteine 143 with cysteine 205. Asparagine 144 is a glycosylation site (N-linked (GlcNAc...) asparagine). Position 177 (serine 177) interacts with Mg(2+). Residue glutamate 238 participates in Ca(2+) binding. Residue asparagine 271 is glycosylated (N-linked (GlcNAc...) asparagine). Ca(2+) is bound by residues phenylalanine 291, glutamate 292, and aspartate 307. Glutamate 333 is a binding site for Mg(2+). Zn(2+)-binding residues include aspartate 338, histidine 342, aspartate 379, and histidine 380. Positions aspartate 425–leucine 449 are disordered. Polar residues predominate over residues serine 434 to alanine 446. Residue histidine 454 participates in Zn(2+) binding. The cysteines at positions 489 and 496 are disulfide-linked. Aspartate 506 is lipidated: GPI-anchor amidated aspartate. The propeptide at alanine 507 to proline 535 is removed in mature form. A helical transmembrane segment spans residues serine 513–leucine 529.

This sequence belongs to the alkaline phosphatase family. Homodimer. The cofactor is Mg(2+). Zn(2+) is required as a cofactor. Ca(2+) serves as cofactor. Detected in placenta (at protein level).

It localises to the cell membrane. It catalyses the reaction a phosphate monoester + H2O = an alcohol + phosphate. Its function is as follows. Alkaline phosphatase that can hydrolyze various phosphate compounds. The polypeptide is Alkaline phosphatase, placental type (Homo sapiens (Human)).